A 238-amino-acid polypeptide reads, in one-letter code: Uridylate kinase (238 aa).

An ATP-binding site is contributed by 12 to 15 (KLSG). Gly-54 lines the UMP pocket. Residues Gly-55 and Arg-59 each coordinate ATP. Residues Asp-74 and 135-142 (TGNPFFTT) contribute to the UMP site. The ATP site is built by Thr-162, Tyr-168, and Asp-171.

The protein belongs to the UMP kinase family. Homohexamer.

It localises to the cytoplasm. It carries out the reaction UMP + ATP = UDP + ADP. It functions in the pathway pyrimidine metabolism; CTP biosynthesis via de novo pathway; UDP from UMP (UMPK route): step 1/1. Inhibited by UTP. In terms of biological role, catalyzes the reversible phosphorylation of UMP to UDP. The chain is Uridylate kinase from Bordetella pertussis (strain Tohama I / ATCC BAA-589 / NCTC 13251).